A 222-amino-acid polypeptide reads, in one-letter code: C-8 sterol isomerase ERG2 (222 aa).

The chain crosses the membrane as a helical span at residues 3–23; it reads FFPLLLLIGVVGYIMNVLFTT.

It belongs to the ERG2 family.

It localises to the endoplasmic reticulum membrane. It carries out the reaction fecosterol = episterol. The protein operates within steroid metabolism; ergosterol biosynthesis; ergosterol from zymosterol: step 2/5. Its activity is regulated as follows. Catalytic activity is inhibited by the morphilines tridemorph, fenpropimorph, and fenpropidin. Functionally, C-8 sterol isomerase; part of the third module of ergosterol biosynthesis pathway that includes the late steps of the pathway. ERG2 catalyzes the reaction which results in unsaturation at C-7 in the B ring of sterols and thus converts fecosterol to episterol. The third module or late pathway involves the ergosterol synthesis itself through consecutive reactions that mainly occur in the endoplasmic reticulum (ER) membrane. Firstly, the squalene synthase ERG9 catalyzes the condensation of 2 farnesyl pyrophosphate moieties to form squalene, which is the precursor of all steroids. Squalene synthase is crucial for balancing the incorporation of farnesyl diphosphate (FPP) into sterol and nonsterol isoprene synthesis. Secondly, the squalene epoxidase ERG1 catalyzes the stereospecific oxidation of squalene to (S)-2,3-epoxysqualene, which is considered to be a rate-limiting enzyme in steroid biosynthesis. Then, the lanosterol synthase ERG7 catalyzes the cyclization of (S)-2,3 oxidosqualene to lanosterol, a reaction that forms the sterol core. In the next steps, lanosterol is transformed to zymosterol through a complex process involving various demethylation, reduction and desaturation reactions. The lanosterol 14-alpha-demethylase ERG11 (also known as CYP51) catalyzes C14-demethylation of lanosterol to produce 4,4'-dimethyl cholesta-8,14,24-triene-3-beta-ol, which is critical for ergosterol biosynthesis. The C-14 reductase ERG24 reduces the C14=C15 double bond of 4,4-dimethyl-cholesta-8,14,24-trienol to produce 4,4-dimethyl-cholesta-8,24-dienol. 4,4-dimethyl-cholesta-8,24-dienol is substrate of the C-4 demethylation complex ERG25-ERG26-ERG27 in which ERG25 catalyzes the three-step monooxygenation required for the demethylation of 4,4-dimethyl and 4alpha-methylsterols, ERG26 catalyzes the oxidative decarboxylation that results in a reduction of the 3-beta-hydroxy group at the C-3 carbon to an oxo group, and ERG27 is responsible for the reduction of the keto group on the C-3. ERG28 has a role as a scaffold to help anchor ERG25, ERG26 and ERG27 to the endoplasmic reticulum and ERG29 regulates the activity of the iron-containing C4-methylsterol oxidase ERG25. Then, the sterol 24-C-methyltransferase ERG6 catalyzes the methyl transfer from S-adenosyl-methionine to the C-24 of zymosterol to form fecosterol. The C-8 sterol isomerase ERG2 catalyzes the reaction which results in unsaturation at C-7 in the B ring of sterols and thus converts fecosterol to episterol. The sterol-C5-desaturase ERG3 then catalyzes the introduction of a C-5 double bond in the B ring to produce 5-dehydroepisterol. The C-22 sterol desaturase ERG5 further converts 5-dehydroepisterol into ergosta-5,7,22,24(28)-tetraen-3beta-ol by forming the C-22(23) double bond in the sterol side chain. Finally, ergosta-5,7,22,24(28)-tetraen-3beta-ol is substrate of the C-24(28) sterol reductase ERG4 to produce ergosterol. The polypeptide is C-8 sterol isomerase ERG2 (Saccharomyces cerevisiae (strain ATCC 204508 / S288c) (Baker's yeast)).